Consider the following 390-residue polypeptide: Probable purine permease 18 (390 aa).

Residues Met-1–Gly-14 are compositionally biased toward polar residues. Residues Met-1–Ile-23 form a disordered region. Position 25 is a phosphoserine (Ser-25). The next 10 membrane-spanning stretches (helical) occupy residues Ile-39 to Leu-59, Trp-81 to Phe-101, Leu-120 to Leu-140, Gly-148 to Ile-168, Trp-176 to Gly-196, Trp-211 to Phe-231, Val-250 to Phe-270, Ile-297 to Val-317, Val-324 to Met-344, and Phe-348 to Tyr-368.

Belongs to the purine permeases (TC 2.A.7.14) family.

Its subcellular location is the membrane. The protein is Probable purine permease 18 (PUP18) of Arabidopsis thaliana (Mouse-ear cress).